Here is a 440-residue protein sequence, read N- to C-terminus: MILKNVKLKSGEITVPGDKSLSHRSVLFAALCKGKSKVTGFLEAEDPLNTMSAFTKLGLKVRKVKPGEYEFESPGKRGFISPNVDLDFGNAGTGIRLSAGLLCGLPGVNAVLTGDGSLKKRPMGRIIKPLTAMGASILGLGEKETAPLKVEGKKLKSFRYESPIASAQIKSCLMLAAIASETDLEYSENILSRDHTENMFRFLGNKIEQISPFHFKIEPPYVLNGGEFKVPGDISSAAFFLVLGVLAKEGNLLVRNIGLNPARIGILKALELMGAKIEIRNQRMECGEPVGDLKTYPSILNKTNIPKSLIPSIIDEIPILSVAGLFAKGGFEIRHAEELRAKESDRIHTMVSNFRALGIEVEEYPDGYAFDGTSPQSLEIWKFLASGKKISILSHMDHRITMSFLIFKTLSGFNLHIDETSWIETSFPGFEKLLESCLDE.

3-phosphoshikimate is bound by residues K19, S20, and R24. K19 serves as a coordination point for phosphoenolpyruvate. G92 and R121 together coordinate phosphoenolpyruvate. Residues S166, Q168, D315, and K342 each coordinate 3-phosphoshikimate. Q168 is a phosphoenolpyruvate binding site. D315 acts as the Proton acceptor in catalysis. Residues R346 and R399 each contribute to the phosphoenolpyruvate site.

The protein belongs to the EPSP synthase family. Monomer.

It localises to the cytoplasm. It carries out the reaction 3-phosphoshikimate + phosphoenolpyruvate = 5-O-(1-carboxyvinyl)-3-phosphoshikimate + phosphate. It functions in the pathway metabolic intermediate biosynthesis; chorismate biosynthesis; chorismate from D-erythrose 4-phosphate and phosphoenolpyruvate: step 6/7. Its function is as follows. Catalyzes the transfer of the enolpyruvyl moiety of phosphoenolpyruvate (PEP) to the 5-hydroxyl of shikimate-3-phosphate (S3P) to produce enolpyruvyl shikimate-3-phosphate and inorganic phosphate. This is 3-phosphoshikimate 1-carboxyvinyltransferase from Leptospira borgpetersenii serovar Hardjo-bovis (strain JB197).